The following is a 342-amino-acid chain: N-acetyl-gamma-glutamyl-phosphate reductase (342 aa).

Residue C149 is part of the active site.

The protein belongs to the NAGSA dehydrogenase family. Type 1 subfamily.

The protein resides in the cytoplasm. It catalyses the reaction N-acetyl-L-glutamate 5-semialdehyde + phosphate + NADP(+) = N-acetyl-L-glutamyl 5-phosphate + NADPH + H(+). It functions in the pathway amino-acid biosynthesis; L-arginine biosynthesis; N(2)-acetyl-L-ornithine from L-glutamate: step 3/4. Its function is as follows. Catalyzes the NADPH-dependent reduction of N-acetyl-5-glutamyl phosphate to yield N-acetyl-L-glutamate 5-semialdehyde. This is N-acetyl-gamma-glutamyl-phosphate reductase from Thiobacillus denitrificans (strain ATCC 25259 / T1).